A 5376-amino-acid chain; its full sequence is Zonadhesin (5376 aa).

An N-terminal signal peptide occupies residues 1–17 (MALPVWTLMLLVGAAWG). The Extracellular segment spans residues 18-5310 (QEQVPAWRPN…TTRKKIEASS (5293 aa)). 3 consecutive MAM domains span residues 45–210 (SKCD…TCNQ), 215–374 (QMCT…PCGE), and 377–542 (PQCD…PCRV). Asn-339 and Asn-499 each carry an N-linked (GlcNAc...) asparagine glycan. Positions 547 to 1170 (EIPSSPLLPP…PTTGVSTTES (624 aa)) are 80 X heptapeptide repeats (approximate) (mucin-like domain). Disordered regions lie at residues 553–579 (LLPPTGPSESTVPTLPMEQPTSPTKAT) and 1037–1113 (TVPP…TVST). Over residues 1052 to 1113 (TEVTTTPPEE…IASEETTVST (62 aa)) the composition is skewed to low complexity. The 50-residue stretch at 1171-1220 (CPPNAHIELCACPASCESPKPSCQPPCIPGCVCNPGFLFSNNQCINESSC) folds into the TIL 1 domain. Asn-1216, Asn-1239, and Asn-1314 each carry an N-linked (GlcNAc...) asparagine glycan. In terms of domain architecture, VWFC 1 spans 1227–1275 (KHYKPGEEWFTPNCTERCRCLPGSLMECQISQCGTHTVCQLKSDQYQCE). Residues 1280–1462 (ATCLVYGDLH…DKDWVSSRCQ (183 aa)) form the VWFD 1 domain. 2 cysteine pairs are disulfide-bonded: Cys-1282-Cys-1417 and Cys-1304-Cys-1461. Residues 1555–1608 (CPKNSRYSLCAKPCPETCHPISTTQHCSDKCVEGCECDPGFILSGSECVPSSQC) enclose the TIL 2 domain. Residues 1609–1664 (GCTSFQGRYFKLQEQWFNPDCKEICTCESHNHILCKPWKCKAQEACSYKNGVLGCH) form the VWFC 2 domain. Positions 1669–1849 (ATCMVSGDPH…ILEASDPGCF (181 aa)) constitute a VWFD 2 domain. 2 cysteine pairs are disulfide-bonded: Cys-1671–Cys-1809 and Cys-1693–Cys-1848. N-linked (GlcNAc...) asparagine glycosylation is found at Asn-1814, Asn-1908, and Asn-1933. In terms of domain architecture, TIL 3 spans 1941–1995 (CPPRSSYNPCANSCPATCLTLSTPRDCPTLPCVEGCECQSGHILSGTTCVPLRQC). Residues 1996–2052 (GCSDQDGSYHLLGESWYTEKTCTTLCTCSAHSNITCSPTACKANHVCLRQEGLLRCA) enclose the VWFC 3 domain. Residues Asn-2028, Asn-2111, Asn-2142, and Asn-2332 are each glycosylated (N-linked (GlcNAc...) asparagine). A VWFD 3 domain is found at 2056-2239 (GECRISEDSQ…KDKSMDPNCQ (184 aa)). 2 cysteine pairs are disulfide-bonded: Cys-2058/Cys-2200 and Cys-2080/Cys-2238. The TIL 4 domain occupies 2340–2398 (CPAHSHYTNCLPSCPPSCLDPDSRCEGSGHKVPATCREGCICQPDYVLLNDKCVLRSHC). Residues 2399–2454 (GCKDAQGVFIPAGKTWISEDCTQSCTCMKGSMRCWDFQCPPGTYCKNSNDGSSNCV) form the VWFC 4 domain. In terms of domain architecture, TIL 5 spans 2460-2518 (CPAHSKFTDCLPPCHPSCSDPDGHCEGISTNAHSNCKEGCVCQPGYVLRNDKCVLRIEC). One can recognise a VWFC 5 domain in the interval 2519–2574 (GCQHTQGGFIPAGKNWTSRGCSQSCDCMEGVIRCQNFQCPSGTYCQDIEDGTSNCA). N-linked (GlcNAc...) asparagine glycans are attached at residues Asn-2533 and Asn-2575. A TIL 6 domain is found at 2580–2638 (CPAHSSFTNCLPPCQPSCSDPEGHCGGSTTKAPSACQEGCVCEPDYVVLNNKCVPRIEC). The VWFC 6 domain maps to 2639–2694 (GCKDAQGVLIPADKIWINKGCTQTCACVTGTIHCRDFQCPSGTYCKDIKDDASNCT). A glycan (N-linked (GlcNAc...) asparagine) is linked at Asn-2692. The region spanning 2700-2758 (CPDHSLYTHCLPSCLLSCSDPDGLCRGTSPEAPSTCKEGCVCDPDYVLSNDKCVLRIEC) is the TIL 7 domain. A VWFC 7 domain is found at 2759–2814 (GCKDAQGVLIPAGKTWINRGCTQSCSCMGGAIQCQNFKCPSEAYCQDMEDGNSNCT). An N-linked (GlcNAc...) asparagine glycan is attached at Asn-2812. One can recognise a TIL 8 domain in the interval 2820-2878 (CPAHSHYTNCLPTCQPSCSDPDGHCEGSSTKAPSACKEGCVCEPDYVMLNNKCVPRIEC). Residues 2879–2934 (GCKDTQGVLIPADKTWINRGCTQSCTCRGGAIQCQKYHCSSGTYCKDMEDDSSSCA) form the VWFC 8 domain. A TIL 9 domain is found at 2940 to 2998 (CPAHSHFTNCLPPCQPSCLDSEGHCEGSTTKAPSACQEGCVCEPDYVVLNNKCVPRIEC). The VWFC 9 domain occupies 2999–3054 (GCKDAQGVLIPADKTWINRGCTQSCTCKGGAIQCQKFQCPSETYCKDIEDGNSNCT). Residues Asn-3052, Asn-3065, Asn-3144, and Asn-3172 are each glycosylated (N-linked (GlcNAc...) asparagine). One can recognise a TIL 10 domain in the interval 3060 to 3118 (CPANSNFTSCLPSCQPSCSNTDVHCEGSSPNTLSSCREGCVCQSGYVLHNDKCILRNQC). A VWFC 10 domain is found at 3119–3174 (GCKDAQGALIPEGKTWITSGCTQSCNCTGGAIQCQNFQCPLKTYCKDLKDGSSNCT). Residues 3180 to 3238 (CPAHSRYTNCLPSCPPLCLDPEGLCEGTSPKVPSTCREGCICQPGYLMHKNKCVLRIFC) form the TIL 11 domain. A VWFC 11 domain is found at 3239-3294 (GCKNTQGAFISADKTWISRGCTQSCTCPAGAIHCRNFKCPSGTYCKNGDNGSSNCT). 2 N-linked (GlcNAc...) asparagine glycosylation sites follow: Asn-3288 and Asn-3292. In terms of domain architecture, TIL 12 spans 3300 to 3355 (CPTNSQFTDCLPSCVPSCSNRCEVTSPSVPSSCREGCLCNHGFVFSEDKCVPRTQC). The VWFC 12 domain maps to 3356-3411 (GCKDARGAIIPAGKTWTSKGCTQSCACVEGNIQCQNFQCPPETYCKDNSEGSSTCT). The TIL 13 domain occupies 3417–3475 (CPAHTQYTSCLPSCLPSCLDPEGLCKDISPKVPSTCKEGCVCQSGYVLNSDKCVLRAEC). A VWFC 13 domain is found at 3476-3531 (DCKDAQGALIPAGKTWTSPGCTQSCACMGGAVQCQSSQCPPGTYCKDNEDGNSNCA). The 59-residue stretch at 3537 to 3595 (CPAHSLFTNCLPPCLPSCLDPDGLCKGASPKVPSTCKEGCICQSGYVLSNNKCLLRNRC) folds into the TIL 14 domain. In terms of domain architecture, VWFC 14 spans 3596 to 3651 (GCKDAHGALIPEDKTWVSRGCTQSCVCTGGSIQCLSSQCPPGAYCKDNEDGSSNCA). Residues 3657–3715 (CPANSHYTDCFPPCPPSCSDPEGHCEASGPRVLSTCREGCLCNPGFVLDRDKCVPRVEC) form the TIL 15 domain. The region spanning 3716–3771 (GCKDAQGALIPSGKTWTSPGCTQSCACMGGVVQCQSSQCPPGTYCKDNEDGNSNCA) is the VWFC 15 domain. Positions 3777 to 3835 (CPTHSNYTDCLPFCLPSCLDPSALCGGTSPKGPSTCKEGCVCQPGYVLDKDKCILKIEC) constitute a TIL 16 domain. Asn-3782 is a glycosylation site (N-linked (GlcNAc...) asparagine). Positions 3836–3891 (GCRDTQGAVIPAGKTWLSTGCIQSCACVEGTIQCQNFQCPPGTYCNHNNNCAKIPL) constitute a VWFC 16 domain. Residues 3893 to 3951 (CPAHSHFTSCLPSCPPSCANLDGSCEQTSPKVPSTCKEGCLCQPGYFLNNGKCVLQTHC) enclose the TIL 17 domain. The VWFC 17 domain maps to 3952–4007 (DCKDAEGGLVPAGKTWTSKDCTQSCACTGGAVQCQNFQCPLGTYCKDSGDGSSNCT). N-linked (GlcNAc...) asparagine glycosylation is present at Asn-4005. The 59-residue stretch at 4029–4087 (CPAHSHFTSCLPSCPPSCSNLDGSCVESNFKAPSVCKKGCICQPGYLLNNDKCVLRIQC) folds into the TIL 18 domain. A VWFC 18 domain is found at 4088 to 4143 (GCKDTQGGLIPAGRTWISSDCTKSCSCMGGIIQCRDFQCPPGTYCKESNDSSRTCA). Asn-4136 is a glycosylation site (N-linked (GlcNAc...) asparagine). The 59-residue stretch at 4149–4207 (CPAHSHYTNCLPACSRSCTDLDGHCEGTSPKVPSPCKEGCLCQPGYVVHNHKCVLQIHC) folds into the TIL 19 domain. The region spanning 4208 to 4262 (GCKDAQGGFVPAGKTWISRGCTQSCACVGGAVQCHNFTCPTGTQCQNSSCSKITV) is the VWFC 19 domain. Asn-4243 and Asn-4254 each carry an N-linked (GlcNAc...) asparagine glycan. The TIL 20 domain occupies 4264-4322 (CPAHSQYTTCLPSCLPSCFDPEGLCGGASPRAPSTCREGCVCEADYVLREDKCVLRTQC). Positions 4323–4378 (GCKDAQGDLIPANKTWLTRGCAQKCTCKGGNIHCWNFKCPLGTECKDSVDGGSNCT) constitute a VWFC 20 domain. Residues Asn-4335 and Asn-4376 are each glycosylated (N-linked (GlcNAc...) asparagine). The TIL 21 domain occupies 4384–4442 (CPAHSHHTYCLPSCIPSCSNVNDRCESTSLQRPSTCIEGCLCHSGFVFSKDKCVPRTQC). Positions 4443–4498 (GCKDSQGTLIPAGKNWITTGCSQRCTCTGGLVQCHDFQCPSGAECQDIEDGNSNCV) constitute a VWFC 21 domain. The region spanning 4504–4562 (CPAHSHYSKCLPPCQPSCSDPDGHCEGTSPEAPSTCEEGCVCEPDYVLSNDKCVPSSEC) is the TIL 22 domain. Residues 4563 to 4618 (GCKDAHGVLIPESKTWVSRGCTKNCTCKGGTVQCHDFSCPTGSRCLDNNEGNSNCV) form the VWFC 22 domain. The N-linked (GlcNAc...) asparagine glycan is linked to Asn-4586. The region spanning 4624–4682 (CPAHSLYTNCLPSCLPSCSDPEGLCGGTSPEVPSTCKEGCICQSGYVLHKNKCMLRIHC) is the TIL 23 domain. The 56-residue stretch at 4683-4738 (DCKDFQGSLIKTGQTWISSGCSKICTCKGGFFQCQSYKCPSGTQCEESEDGSSNCV) folds into the VWFC 23 domain. Residues 4744-4802 (CPANSLYTHCLPTCLPSCSNPDGRCEGTSHKAPSTCREGCVCQPGYLLNKDTCVHKNQC) form the TIL 24 domain. The 56-residue stretch at 4803 to 4858 (GCKDIRGNIIPAGNTWISSDCTQSCACTDGVIQCQNFVCPSGSHCQYNEDGSSDCA) folds into the VWFC 24 domain. Positions 4863–5038 (ERCTIFGDPY…SWEVKAQHAF (176 aa)) constitute a VWFD 4 domain. Cys-4865 and Cys-5001 are oxidised to a cystine. N-linked (GlcNAc...) asparagine glycosylation occurs at Asn-5136. One can recognise a TIL 25 domain in the interval 5150 to 5203 (CPANTVYQRCMTPCPASCAKFVTPKVCEGPCVEGCASLPGYIYSDTQSLPVTHC). The region spanning 5204–5258 (GCTADGIYYKLGDSFVTNDCSQHCTCASQGILLCEPYGCRAGESCMVANFTRGCF) is the VWFC 25 domain. Asn-5252 is a glycosylation site (N-linked (GlcNAc...) asparagine). One can recognise an EGF-like domain in the interval 5259 to 5295 (QDSPCLQNPCHNDGRCEEQGATFICHCDFGYGGEFCT). Intrachain disulfides connect Cys-5263–Cys-5274, Cys-5268–Cys-5283, and Cys-5285–Cys-5294. Residues 5311-5337 (LVAILPGVLVMVLVPVLLPRVYVYMAT) traverse the membrane as a helical segment. Topologically, residues 5338–5376 (RTTMGRRRMKRKEKKLLRQSRLRLEDADVPEPTFKATEF) are cytoplasmic.

In terms of assembly, probably forms covalent oligomers. In testis, primarily in haploid spermatids.

The protein resides in the cell membrane. Binds in a species-specific manner to the zona pellucida of the egg. May be involved in gamete recognition and/or signaling. The protein is Zonadhesin (Zan) of Mus musculus (Mouse).